The sequence spans 355 residues: Peptide chain release factor 1 (355 aa).

Gln231 carries the post-translational modification N5-methylglutamine. Residues 280–291 (SERLAKESEARK) show a composition bias toward basic and acidic residues. The tract at residues 280–303 (SERLAKESEARKSQVGSGDRSERI) is disordered.

Belongs to the prokaryotic/mitochondrial release factor family. Methylated by PrmC. Methylation increases the termination efficiency of RF1.

The protein resides in the cytoplasm. Functionally, peptide chain release factor 1 directs the termination of translation in response to the peptide chain termination codons UAG and UAA. The protein is Peptide chain release factor 1 of Campylobacter jejuni (strain RM1221).